The chain runs to 500 residues: MLHETISLALLGQPLVPGLMVVSAILYLLYSTQQWRPKNLPLLNDAGPFDFLQATAVKRFRRDARQLIKSGFDSYNNVFAMRTDVGVELFASPEYADQFRNHPSLKVFPFTAKMHHGHLPGFELCRSQPVEDRILIESVRTQLAQSLGKMIQPLASDIGQAISDRWPSESGWQEIALGSVIERTIAQGTSSVYCLDEAWPEFVVKMEMALGMASAALSAWPVMLRRVVAKFLPECLELYRIMDAGRELMSRDMRRRVALQASTGEAPLNFFEWFKEASHGEEYDELILNLRIAFASMHGLCDHLVKILLRLSEDPQLVDDLRKEVIQVYKTHGWSKTALYHLKLMDSTFKEVQRVDPILFAVGRLAVADVALKDGLIIPKGQSIRISGHTMWDEDKYPDAAHFDAYRFYKLRQAPGQENTAQFTSPTSDHLGFGYGGRACPGRFFAAAVLKISLCHVLMKYDIKPANGETGPHVWEFAAAINANMTANVLVRRREPEIRL.

A helical transmembrane segment spans residues leucine 8–leucine 28. Cysteine 440 contacts heme.

Belongs to the cytochrome P450 family. Heme serves as cofactor.

It localises to the membrane. It participates in secondary metabolite biosynthesis; terpenoid biosynthesis. Functionally, cytochrome P450 monooxygenase; part of the gene cluster B that mediates the biosynthesis of the fungal meroterpenoid acetoxydehydroaustin. The first step of the pathway is the synthesis of 3,5-dimethylorsellinic acid by the polyketide synthase ausA. 3,5-dimethylorsellinic acid is then prenylated by the polyprenyl transferase ausN. Further epoxidation by the FAD-dependent monooxygenase ausM and cyclization by the probable terpene cyclase ausL lead to the formation of protoaustinoid A. Protoaustinoid A is then oxidized to spiro-lactone preaustinoid A3 by the combined action of the FAD-binding monooxygenases ausB and ausC, and the dioxygenase ausE. Acid-catalyzed keto-rearrangement and ring contraction of the tetraketide portion of preaustinoid A3 by ausJ lead to the formation of preaustinoid A4. The aldo-keto reductase ausK, with the help of ausH, is involved in the next step by transforming preaustinoid A4 into isoaustinone which is in turn hydroxylated by the P450 monooxygenase ausI to form austinolide. The cytochrome P450 monooxygenase ausG then modifies austinolide to austinol. Austinol is further acetylated to austin by the O-acetyltransferase ausP, which spontaneously changes to dehydroaustin. The cytochrome P450 monooxygenase then converts dehydroaustin is into 7-dehydrodehydroaustin. The hydroxylation catalyzed by ausR permits the second O-acetyltransferase ausQ to add an additional acetyl group to the molecule, leading to the formation of acetoxydehydroaustin. Due to genetic rearrangements of the clusters and the subsequent loss of some enzymes, the end product of the Penicillium brasilianum austinoid biosynthesis clusters is acetoxydehydroaustin. The chain is Cytochrome P450 monooxygenase ausI from Penicillium brasilianum.